Consider the following 877-residue polypeptide: ATP-dependent RNA helicase dbp7 (877 aa).

A disordered region spans residues 34–101 (AKKTAQHRVT…RNENTAAYAS (68 aa)). A compositionally biased stretch (basic and acidic residues) spans 50 to 73 (SAREIFSEPQHDTSAEEYIGREAS). Residues 85 to 98 (NYNSYGGRNENTAA) are compositionally biased toward polar residues. Positions 255–284 (ATFTNLGLSRRLAAHLSTKLDMKAPTAIQK) match the Q motif motif. The Helicase ATP-binding domain occupies 288–484 (QQLVSDDSDA…EISLKDAVHI (197 aa)). 301 to 308 (AETGSGKT) serves as a coordination point for ATP. The short motif at 417 to 420 (DEGD) is the DEAD box element. The Helicase C-terminal domain maps to 512–719 (QLKQSYAIVP…LTRHTAEDLI (208 aa)). A disordered region spans residues 814–845 (DRSVAARKAKRGEKAEDKAPEGERVRKQKKME). Residues 825-845 (GEKAEDKAPEGERVRKQKKME) are compositionally biased toward basic and acidic residues.

Belongs to the DEAD box helicase family. DDX31/DBP7 subfamily.

The protein localises to the nucleus. The protein resides in the nucleolus. The catalysed reaction is ATP + H2O = ADP + phosphate + H(+). In terms of biological role, ATP-binding RNA helicase involved in the biogenesis of 60S ribosomal subunits and is required for the normal formation of 25S and 5.8S rRNAs. In Botryotinia fuckeliana (strain B05.10) (Noble rot fungus), this protein is ATP-dependent RNA helicase dbp7 (dbp7).